Here is a 598-residue protein sequence, read N- to C-terminus: Aspartate--tRNA(Asp/Asn) ligase (598 aa).

Glu174 is an L-aspartate binding site. The aspartate stretch occupies residues 198–201; that stretch reads QQLK. Position 220 (Arg220) interacts with L-aspartate. Residues 220 to 222 and Gln229 contribute to the ATP site; that span reads RDE. An L-aspartate-binding site is contributed by His458. Glu492 provides a ligand contact to ATP. Arg499 contributes to the L-aspartate binding site. 544-547 contacts ATP; the sequence is GIDR.

The protein belongs to the class-II aminoacyl-tRNA synthetase family. Type 1 subfamily. In terms of assembly, homodimer.

The protein resides in the cytoplasm. It catalyses the reaction tRNA(Asx) + L-aspartate + ATP = L-aspartyl-tRNA(Asx) + AMP + diphosphate. Functionally, aspartyl-tRNA synthetase with relaxed tRNA specificity since it is able to aspartylate not only its cognate tRNA(Asp) but also tRNA(Asn). Reaction proceeds in two steps: L-aspartate is first activated by ATP to form Asp-AMP and then transferred to the acceptor end of tRNA(Asp/Asn). The polypeptide is Aspartate--tRNA(Asp/Asn) ligase (Dehalococcoides mccartyi (strain CBDB1)).